Here is a 428-residue protein sequence, read N- to C-terminus: Aerobic C4-dicarboxylate transport protein (428 aa).

9 helical membrane passes run 5 to 27 (LFKSLYFQVLTAIAIGILLGHYY), 47 to 64 (MIIAPVIFCTVVTGIAGM), 77 to 99 (ALLYFEIVSTIALIIGLIIVNVV), 141 to 163 (VIGAFASGNILQVLLFAVLFGFA), 184 to 206 (VIFGIINMIMRLAPIGAFGAMAF), 216 to 238 (LVQLGQLIICFYITCILFVVVVL), 289 to 311 (VVGLVIPTGYSFNLDGTSIYLTM), 326 to 348 (IFHQITLLVVLLLSSKGAAGVTG), and 353 to 375 (VLAATISAVGHLPVAGLALILGI).

It belongs to the dicarboxylate/amino acid:cation symporter (DAACS) (TC 2.A.23) family.

It is found in the cell inner membrane. Its function is as follows. Responsible for the transport of dicarboxylates such as succinate, fumarate, and malate from the periplasm across the inner membrane. This is Aerobic C4-dicarboxylate transport protein (dctA) from Salmonella typhimurium (strain LT2 / SGSC1412 / ATCC 700720).